The chain runs to 453 residues: Bifunctional protein GlmU (453 aa).

The interval 1-226 is pyrophosphorylase; the sequence is MFAIAILAAG…IDEVSGVNDR (226 aa). UDP-N-acetyl-alpha-D-glucosamine-binding positions include 7-10, Lys-21, Gln-73, and 78-79; these read LAAG and GT. Asp-103 is a binding site for Mg(2+). Residues Gly-140, Glu-155, Asn-170, and Asn-224 each contribute to the UDP-N-acetyl-alpha-D-glucosamine site. Position 224 (Asn-224) interacts with Mg(2+). Positions 227 to 247 are linker; sequence AQLANCENLIQQSLRNHWMSK. Positions 248 to 453 are N-acetyltransferase; the sequence is GVSFIDPESC…NWKTREETNQ (206 aa). Positions 329 and 347 each coordinate UDP-N-acetyl-alpha-D-glucosamine. His-359 (proton acceptor) is an active-site residue. UDP-N-acetyl-alpha-D-glucosamine-binding residues include Tyr-362 and Asn-373. Acetyl-CoA contacts are provided by Ala-376, Ala-419, and Arg-436.

In the N-terminal section; belongs to the N-acetylglucosamine-1-phosphate uridyltransferase family. The protein in the C-terminal section; belongs to the transferase hexapeptide repeat family. Homotrimer. Mg(2+) is required as a cofactor.

The protein resides in the cytoplasm. It catalyses the reaction alpha-D-glucosamine 1-phosphate + acetyl-CoA = N-acetyl-alpha-D-glucosamine 1-phosphate + CoA + H(+). The catalysed reaction is N-acetyl-alpha-D-glucosamine 1-phosphate + UTP + H(+) = UDP-N-acetyl-alpha-D-glucosamine + diphosphate. It functions in the pathway nucleotide-sugar biosynthesis; UDP-N-acetyl-alpha-D-glucosamine biosynthesis; N-acetyl-alpha-D-glucosamine 1-phosphate from alpha-D-glucosamine 6-phosphate (route II): step 2/2. The protein operates within nucleotide-sugar biosynthesis; UDP-N-acetyl-alpha-D-glucosamine biosynthesis; UDP-N-acetyl-alpha-D-glucosamine from N-acetyl-alpha-D-glucosamine 1-phosphate: step 1/1. It participates in bacterial outer membrane biogenesis; LPS lipid A biosynthesis. Catalyzes the last two sequential reactions in the de novo biosynthetic pathway for UDP-N-acetylglucosamine (UDP-GlcNAc). The C-terminal domain catalyzes the transfer of acetyl group from acetyl coenzyme A to glucosamine-1-phosphate (GlcN-1-P) to produce N-acetylglucosamine-1-phosphate (GlcNAc-1-P), which is converted into UDP-GlcNAc by the transfer of uridine 5-monophosphate (from uridine 5-triphosphate), a reaction catalyzed by the N-terminal domain. In Prochlorococcus marinus (strain MIT 9211), this protein is Bifunctional protein GlmU.